The primary structure comprises 309 residues: Serine/threonine-protein phosphatase 2A catalytic subunit beta isoform (309 aa).

Residues Asp57, His59, Asp85, and Asn117 each coordinate Mn(2+). His118 (proton donor) is an active-site residue. Mn(2+) contacts are provided by His167 and His241. Position 307 is a phosphotyrosine (Tyr307). Position 309 is a leucine methyl ester (Leu309).

It belongs to the PPP phosphatase family. PP-1 subfamily. PP2A consists of a common heterodimeric core enzyme (composed of a 36 kDa catalytic subunit (subunit C) and a 65 kDa constant regulatory subunit (PR65) (subunit A)) that associates with a variety of regulatory subunits. Proteins that associate with the core dimer include three families of regulatory subunits B (the R2/B/PR55/B55, R3/B''/PR72/PR130/PR59 and R5/B'/B56 families), the 48 kDa variable regulatory subunit, viral proteins, and cell signaling molecules. Binds PPME1. May indirectly interact with SGO1, most probably through regulatory B56 subunits. Interacts with CTTNBP2NL. Interacts with PTPA. Found in a complex with at least ARL2, PPP2CB, PPP2R1A, PPP2R2A, PPP2R5E and TBCD. Interacts with TBCD. Part of the core of STRIPAK complexes composed of PP2A catalytic and scaffolding subunits, the striatins (PP2A regulatory subunits), the striatin-associated proteins MOB4, STRIP1 and STRIP2, PDCD10 and members of the STE20 kinases, such as STK24 and STK26. The cofactor is Mn(2+). Reversibly methyl esterified on Leu-309 by leucine carboxyl methyltransferase 1 (Lcmt1) and protein phosphatase methylesterase 1 (Ppme1). Carboxyl methylation influences the affinity of the catalytic subunit for the different regulatory subunits, thereby modulating the PP2A holoenzyme's substrate specificity, enzyme activity and cellular localization. Post-translationally, phosphorylation of either threonine (by autophosphorylation-activated protein kinase) or tyrosine results in inactivation of the phosphatase. Auto-dephosphorylation has been suggested as a mechanism for reactivation. In terms of processing, may be monoubiquitinated by NOSIP.

The protein resides in the cytoplasm. It is found in the nucleus. Its subcellular location is the chromosome. It localises to the centromere. The protein localises to the cytoskeleton. The protein resides in the spindle pole. It carries out the reaction O-phospho-L-seryl-[protein] + H2O = L-seryl-[protein] + phosphate. The catalysed reaction is O-phospho-L-threonyl-[protein] + H2O = L-threonyl-[protein] + phosphate. Its function is as follows. Catalytic subunit of protein phosphatase 2A (PP2A), a serine/threonine phosphatase involved in the regulation of a wide variety of enzymes, signal transduction pathways, and cellular events. PP2A can modulate the activity of phosphorylase B kinase, casein kinase 2, mitogen-stimulated S6 kinase, and MAP-2 kinase. Part of the striatin-interacting phosphatase and kinase (STRIPAK) complexes. STRIPAK complexes have critical roles in protein (de)phosphorylation and are regulators of multiple signaling pathways including Hippo, MAPK, nuclear receptor and cytoskeleton remodeling. Different types of STRIPAK complexes are involved in a variety of biological processes such as cell growth, differentiation, apoptosis, metabolism and immune regulation. In Mus musculus (Mouse), this protein is Serine/threonine-protein phosphatase 2A catalytic subunit beta isoform (Ppp2cb).